A 122-amino-acid chain; its full sequence is Large ribosomal subunit protein uL14 (122 aa).

The protein belongs to the universal ribosomal protein uL14 family. Part of the 50S ribosomal subunit. Forms a cluster with proteins L3 and L19. In the 70S ribosome, L14 and L19 interact and together make contacts with the 16S rRNA in bridges B5 and B8.

Binds to 23S rRNA. Forms part of two intersubunit bridges in the 70S ribosome. The sequence is that of Large ribosomal subunit protein uL14 from Clostridium kluyveri (strain ATCC 8527 / DSM 555 / NBRC 12016 / NCIMB 10680 / K1).